The chain runs to 147 residues: 6-pyruvoyl tetrahydrobiopterin synthase (147 aa).

Zn(2+) is bound at residue histidine 26. Residue cysteine 45 is the Proton acceptor of the active site. Positions 51 and 53 each coordinate Zn(2+). Catalysis depends on charge relay system residues histidine 92 and glutamate 136.

The protein belongs to the PTPS family. As to quaternary structure, homohexamer formed of two homotrimers in a head to head fashion. Requires Zn(2+) as cofactor.

It catalyses the reaction 7,8-dihydroneopterin 3'-triphosphate = 6-pyruvoyl-5,6,7,8-tetrahydropterin + triphosphate + H(+). The protein operates within cofactor biosynthesis; tetrahydrobiopterin biosynthesis; tetrahydrobiopterin from 7,8-dihydroneopterin triphosphate: step 1/3. Functionally, involved in the biosynthesis of tetrahydrobiopterin, an essential cofactor of aromatic amino acid hydroxylases. Catalyzes the transformation of 7,8-dihydroneopterin triphosphate into 6-pyruvoyl tetrahydropterin. The sequence is that of 6-pyruvoyl tetrahydrobiopterin synthase (pts) from Poecilia reticulata (Guppy).